The primary structure comprises 1281 residues: Tubulin polyglutamylase TTLL5 (1281 aa).

Residues R62–S407 form the TTL domain. Residues K180, R186 to G187, S208 to I211, and K221 to D223 contribute to the ATP site. R186 contributes to the a protein binding site. R247 is an L-glutamate binding site. T268 to N269 is a binding site for ATP. L-glutamate contacts are provided by Y270, S271, and K293. Positions 353, 366, and 368 each coordinate Mg(2+). Residues P378–T488 are c-MTBD region. K384 provides a ligand contact to L-glutamate. Disordered regions lie at residues M577–N614, S1072–G1114, and S1199–I1281. Positions E584–Q604 are enriched in acidic residues. Polar residues-rich tracts occupy residues S1086–T1113, S1199–P1212, A1240–N1263, and I1270–I1281.

This sequence belongs to the tubulin--tyrosine ligase family. In terms of assembly, interacts with the transcriptional coactivators NCOA1/SRC-1 and NCOA2/TIF2. Mg(2+) is required as a cofactor. Expressed in the retina, found in the rod and cone photoreceptors (at protein level). Widely expressed with highest levels in heart and skeletal muscle and low levels in other tissues.

It is found in the cell projection. Its subcellular location is the cilium. The protein localises to the cytoplasm. The protein resides in the cytoskeleton. It localises to the cilium basal body. It is found in the nucleus. The enzyme catalyses L-glutamyl-[protein] + L-glutamate + ATP = gamma-L-glutamyl-L-glutamyl-[protein] + ADP + phosphate + H(+). It carries out the reaction (L-glutamyl)(n)-gamma-L-glutamyl-L-glutamyl-[protein] + L-glutamate + ATP = (L-glutamyl)(n+1)-gamma-L-glutamyl-L-glutamyl-[protein] + ADP + phosphate + H(+). Its function is as follows. Polyglutamylase which modifies tubulin, generating polyglutamate side chains on the gamma-carboxyl group of specific glutamate residues within the C-terminal tail of tubulin. Preferentially mediates ATP-dependent initiation step of the polyglutamylation reaction over the elongation step. Preferentially modifies the alpha-tubulin tail over a beta-tail. Required for CCSAP localization to both polyglutamylated spindle and cilia microtubules. Increases the effects of transcriptional coactivator NCOA2/TIF2 in glucocorticoid receptor-mediated repression and induction and in androgen receptor-mediated induction. This Homo sapiens (Human) protein is Tubulin polyglutamylase TTLL5.